We begin with the raw amino-acid sequence, 60 residues long: MKMGNLICTCLFSSKENTNARTTDSLTSYPLPDQHISIRTFRELNQAPTSRRTSTKTAIP.

The protein belongs to the geminiviridae protein AC4/C4 family.

Functionally, pathogenicity determinant. May act as a suppressor of RNA-mediated gene silencing, also known as post-transcriptional gene silencing (PTGS), a mechanism of plant viral defense that limits the accumulation of viral RNAs. This Pepper huasteco yellow vein virus (PHYVV) protein is Protein AC4.